Consider the following 207-residue polypeptide: Small ribosomal subunit protein uS4 (207 aa).

The interval 33–54 is disordered; that stretch reads KLDSKPGQHGRTSGARTSDYGN. A compositionally biased stretch (polar residues) spans 42–53; it reads GRTSGARTSDYG. The 64-residue stretch at 97-160 folds into the S4 RNA-binding domain; it reads SRLDNVVYRM…KKQVRIAEAL (64 aa).

The protein belongs to the universal ribosomal protein uS4 family. As to quaternary structure, part of the 30S ribosomal subunit. Contacts protein S5. The interaction surface between S4 and S5 is involved in control of translational fidelity.

Functionally, one of the primary rRNA binding proteins, it binds directly to 16S rRNA where it nucleates assembly of the body of the 30S subunit. In terms of biological role, with S5 and S12 plays an important role in translational accuracy. The sequence is that of Small ribosomal subunit protein uS4 from Cupriavidus pinatubonensis (strain JMP 134 / LMG 1197) (Cupriavidus necator (strain JMP 134)).